Reading from the N-terminus, the 130-residue chain is Small ribosomal subunit protein uS9 (130 aa).

It belongs to the universal ribosomal protein uS9 family.

This chain is Small ribosomal subunit protein uS9, found in Idiomarina loihiensis (strain ATCC BAA-735 / DSM 15497 / L2-TR).